The sequence spans 333 residues: Transcription factor MYB36 (333 aa).

HTH myb-type domains are found at residues 9–62 (KANV…LNYL) and 63–117 (RPNI…KKKL). 2 consecutive DNA-binding regions (H-T-H motif) follow at residues 38 to 62 (WIAL…LNYL) and 90 to 113 (WSII…NTKL). The tract at residues 119–150 (GRQKQMNRQDSITDSTENNLSNNNNNKSPQNL) is disordered. Polar residues predominate over residues 122–135 (KQMNRQDSITDSTE). Residues 136–150 (NNLSNNNNNKSPQNL) are compositionally biased toward low complexity.

As to expression, expressed in leaves, roots (endodermis-specific) and seedlings.

The protein localises to the nucleus. Functionally, transcription factors that activates genes required for endodermal differentiation but represses genes involved in proliferative divisions, thus regulating the transition from proliferation to differentiation in root endodermis. Required for Casparian strip formation by positively regulating the expression of the Casparian strip genes CASP1, PER64 and ESB1 and other endodermis-specific genes, thus triggering correct localized lignin biosynthesis in root endodermis and subsequently regulating global ion homeostasis. In Arabidopsis thaliana (Mouse-ear cress), this protein is Transcription factor MYB36.